The chain runs to 224 residues: Glycerol-3-phosphate acyltransferase (224 aa).

6 consecutive transmembrane segments (helical) span residues 14 to 34, 70 to 90, 99 to 119, 129 to 149, 162 to 182, and 185 to 205; these read INMI…GWLL, YLSI…VLGA, TQWS…YLGF, IGSV…IWGI, LIGV…LPLP, and ISII…LFIF.

Belongs to the PlsY family. In terms of assembly, probably interacts with PlsX.

It is found in the cell inner membrane. It catalyses the reaction an acyl phosphate + sn-glycerol 3-phosphate = a 1-acyl-sn-glycero-3-phosphate + phosphate. The protein operates within lipid metabolism; phospholipid metabolism. Its function is as follows. Catalyzes the transfer of an acyl group from acyl-phosphate (acyl-PO(4)) to glycerol-3-phosphate (G3P) to form lysophosphatidic acid (LPA). This enzyme utilizes acyl-phosphate as fatty acyl donor, but not acyl-CoA or acyl-ACP. In Helicobacter hepaticus (strain ATCC 51449 / 3B1), this protein is Glycerol-3-phosphate acyltransferase.